A 203-amino-acid chain; its full sequence is dITP/XTP pyrophosphatase (203 aa).

Substrate is bound at residue Ser-16–Lys-21. Mg(2+) is bound by residues Glu-48 and Asp-77. Asp-77 acts as the Proton acceptor in catalysis. Substrate is bound by residues Ser-78, Phe-161–Asp-164, Lys-184, and His-189–Arg-190.

The protein belongs to the HAM1 NTPase family. Homodimer. The cofactor is Mg(2+).

The catalysed reaction is XTP + H2O = XMP + diphosphate + H(+). The enzyme catalyses dITP + H2O = dIMP + diphosphate + H(+). It catalyses the reaction ITP + H2O = IMP + diphosphate + H(+). Its function is as follows. Pyrophosphatase that catalyzes the hydrolysis of nucleoside triphosphates to their monophosphate derivatives, with a high preference for the non-canonical purine nucleotides XTP (xanthosine triphosphate), dITP (deoxyinosine triphosphate) and ITP. Seems to function as a house-cleaning enzyme that removes non-canonical purine nucleotides from the nucleotide pool, thus preventing their incorporation into DNA/RNA and avoiding chromosomal lesions. The polypeptide is dITP/XTP pyrophosphatase (Rhodospirillum centenum (strain ATCC 51521 / SW)).